The chain runs to 158 residues: N5-carboxyaminoimidazole ribonucleotide mutase (158 aa).

The substrate site is built by S10, D13, and R40.

The protein belongs to the AIR carboxylase family. Class I subfamily.

The enzyme catalyses 5-carboxyamino-1-(5-phospho-D-ribosyl)imidazole + H(+) = 5-amino-1-(5-phospho-D-ribosyl)imidazole-4-carboxylate. It participates in purine metabolism; IMP biosynthesis via de novo pathway; 5-amino-1-(5-phospho-D-ribosyl)imidazole-4-carboxylate from 5-amino-1-(5-phospho-D-ribosyl)imidazole (N5-CAIR route): step 2/2. In terms of biological role, catalyzes the conversion of N5-carboxyaminoimidazole ribonucleotide (N5-CAIR) to 4-carboxy-5-aminoimidazole ribonucleotide (CAIR). The sequence is that of N5-carboxyaminoimidazole ribonucleotide mutase from Saccharolobus solfataricus (strain ATCC 35092 / DSM 1617 / JCM 11322 / P2) (Sulfolobus solfataricus).